We begin with the raw amino-acid sequence, 357 residues long: MGSLEVEKTAIGWAARDPSGILSPYTYTLRNTGPEDVQVKVLYCGLCHSDLHQVKNDLGMSNYPMVPGHEVVGEVVEVGPEVTKFKVGDTVGVGLIVGCCKNCRPCKQDIEQYCAKKIWNCNDVYTDGKPTQGGFSNFMVVEQKFVVKIPEGMAPEQAAPLLCAGVTVYSPLNHFGFNQSGLRGGILGLGGVGHMGVKIAKAMGHHVTVISSSDKKRQEALDHLGADDYLVSSVNEKMQEAADSLDYIIDTIPVNHPLEPYLSLLKVDGKLILMGVINTPLQFVSPMVMLGRKSITGSFIGSMKETEEVLHFCKEKGVTCQIEMVKMDYINTAMERLEKNDVRYRFVVDVAGSKLDQ.

The Enoyl reductase (ER) domain occupies glycine 20–valine 348. Cysteine 47 serves as a coordination point for Zn(2+). Serine 49 serves as a coordination point for NADP(+). Histidine 69, glutamate 70, cysteine 100, cysteine 103, cysteine 106, cysteine 114, and cysteine 163 together coordinate Zn(2+). NADP(+)-binding positions include threonine 167, glycine 188–glycine 193, serine 211–lysine 216, threonine 251, glycine 275, and serine 298–isoleucine 300.

This sequence belongs to the zinc-containing alcohol dehydrogenase family. Homodimer. Requires Zn(2+) as cofactor. In terms of tissue distribution, accumulates mainly in the placenta of red fruits, and, to a lower extent, in green fruits placenta, pericarp and seeds.

Its subcellular location is the cytoplasm. It carries out the reaction (E)-cinnamyl alcohol + NADP(+) = (E)-cinnamaldehyde + NADPH + H(+). It catalyses the reaction (E)-coniferol + NADP(+) = (E)-coniferaldehyde + NADPH + H(+). The catalysed reaction is (E)-sinapyl alcohol + NADP(+) = (E)-sinapaldehyde + NADPH + H(+). The enzyme catalyses (E)-4-coumaroyl alcohol + NADP(+) = (E)-4-coumaraldehyde + NADPH + H(+). It carries out the reaction (E)-caffeyl alcohol + NADP(+) = (E)-caffeyl aldehyde + NADPH + H(+). It catalyses the reaction vanillin + NADPH + H(+) = 4-hydroxy-3-methoxy-benzenemethanol + NADP(+). The protein operates within aromatic compound metabolism; phenylpropanoid biosynthesis. Its activity is regulated as follows. Inhibited, in a concentration-dependent manner, by N-(O-hydroxyphenyl) sulfinamoyltertiobutyl acetate (OHPAS), a specific cinnamyl alcohol dehydrogenase (CAD) inhibitor, as well as by ethylenediaminetetraacetic acid (EDTA), a metalloenzyme inhibitor. Functionally, involved in the biosynthesis of capsinoids natural products (e.g. capsiate), non-pungent alkaloids synthesized from phenylpropanoid intermediates in the placental tissue of sweet chili pepper fruit acting as repellant on herbivorous mammals. Catalyzes the reduction of vanillin to generate vanillyl alcohol, a precursor of capsiate, a non-pungent component that accumulates mainly in the placenta of mature red fruits, but also in green fruits to lower levels. Involved in lignin biosynthesis. Catalyzes the final step specific for the production of lignin monomers. Mediates the conversion of cinnamaldehyde and coniferaldehyde to cinnamyl alcohol and coniferyl alcohol, respectively. Catalyzes the NADPH-dependent reduction of 5-hydroxyconiferaldehyde, sinapaldehyde, 4-coumaraldehyde and caffeyl aldehyde to their respective alcohols. The sequence is that of Cinnamyl alcohol dehydrogenase 1 from Capsicum annuum (Capsicum pepper).